The chain runs to 275 residues: 4-hydroxy-3-methylbut-2-enyl diphosphate reductase (275 aa).

Cys-12 contributes to the [4Fe-4S] cluster binding site. (2E)-4-hydroxy-3-methylbut-2-enyl diphosphate contacts are provided by His-36 and His-70. Residues His-36 and His-70 each contribute to the dimethylallyl diphosphate site. Isopentenyl diphosphate is bound by residues His-36 and His-70. Cys-92 is a binding site for [4Fe-4S] cluster. His-120 lines the (2E)-4-hydroxy-3-methylbut-2-enyl diphosphate pocket. His-120 lines the dimethylallyl diphosphate pocket. His-120 provides a ligand contact to isopentenyl diphosphate. Residue Glu-122 is the Proton donor of the active site. Position 158 (Thr-158) interacts with (2E)-4-hydroxy-3-methylbut-2-enyl diphosphate. Position 186 (Cys-186) interacts with [4Fe-4S] cluster. (2E)-4-hydroxy-3-methylbut-2-enyl diphosphate is bound by residues Ser-214, Ser-215, Asn-216, and Ser-258. Dimethylallyl diphosphate contacts are provided by Ser-214, Ser-215, Asn-216, and Ser-258. The isopentenyl diphosphate site is built by Ser-214, Ser-215, Asn-216, and Ser-258.

Belongs to the IspH family. [4Fe-4S] cluster serves as cofactor.

The catalysed reaction is isopentenyl diphosphate + 2 oxidized [2Fe-2S]-[ferredoxin] + H2O = (2E)-4-hydroxy-3-methylbut-2-enyl diphosphate + 2 reduced [2Fe-2S]-[ferredoxin] + 2 H(+). It catalyses the reaction dimethylallyl diphosphate + 2 oxidized [2Fe-2S]-[ferredoxin] + H2O = (2E)-4-hydroxy-3-methylbut-2-enyl diphosphate + 2 reduced [2Fe-2S]-[ferredoxin] + 2 H(+). The protein operates within isoprenoid biosynthesis; dimethylallyl diphosphate biosynthesis; dimethylallyl diphosphate from (2E)-4-hydroxy-3-methylbutenyl diphosphate: step 1/1. Its pathway is isoprenoid biosynthesis; isopentenyl diphosphate biosynthesis via DXP pathway; isopentenyl diphosphate from 1-deoxy-D-xylulose 5-phosphate: step 6/6. Catalyzes the conversion of 1-hydroxy-2-methyl-2-(E)-butenyl 4-diphosphate (HMBPP) into a mixture of isopentenyl diphosphate (IPP) and dimethylallyl diphosphate (DMAPP). Acts in the terminal step of the DOXP/MEP pathway for isoprenoid precursor biosynthesis. The protein is 4-hydroxy-3-methylbut-2-enyl diphosphate reductase of Campylobacter hominis (strain ATCC BAA-381 / DSM 21671 / CCUG 45161 / LMG 19568 / NCTC 13146 / CH001A).